The chain runs to 82 residues: MTDQIRTLQGRVVSDKMDKSITVAIERKVKHPMLGKIIVRTTKLHVHDENNECKTGDLVEIRECRPLSKTKCWTLVSVVEKA.

It belongs to the universal ribosomal protein uS17 family. Part of the 30S ribosomal subunit.

In terms of biological role, one of the primary rRNA binding proteins, it binds specifically to the 5'-end of 16S ribosomal RNA. This is Small ribosomal subunit protein uS17 from Tolumonas auensis (strain DSM 9187 / NBRC 110442 / TA 4).